We begin with the raw amino-acid sequence, 460 residues long: Probable elastin-binding protein EbpS (460 aa).

Residues 1-40 are compositionally biased toward basic and acidic residues; the sequence is MSNNNFKDDFEKNRQSINPDEHQTELKEDDKTNENKKEAD. Positions 1–277 are disordered; that stretch reads MSNNNFKDDF…NQYNDQSEGK (277 aa). The span at 41–57 shows a compositional bias: low complexity; that stretch reads SQNSLSNNSNQQFPPRN. The span at 74–128 shows a compositional bias: basic and acidic residues; it reads QQDDKHQKNSDAKTTEGSLDDRYDEAQLQQQHDKSQQQNKTEKQSQDNRMKDGKD. Residues 177–192 show a composition bias toward low complexity; it reads ATGAGIAGAAGVAGAA. Positions 203–226 are enriched in basic and acidic residues; it reads DKQDSKHSNHENDEKSVKNDDQKQ. Residues 264–273 show a composition bias toward low complexity; it reads SNQNNQYNDQ. The chain crosses the membrane as a helical span at residues 285–305; sequence ILLPLIAAILILGAIAIFGGM. A compositionally biased stretch (basic and acidic residues) spans 313–359; the sequence is SKSDDQKIANQSKKDSDKKDGAQSEDNKDKKSDSNKDKKSDSDKNAD. Residues 313 to 411 are disordered; it reads SKSDDQKIAN…NQQATQGQQS (99 aa). Over residues 364–411 the composition is skewed to low complexity; the sequence is NSSSNPNATSTNNNDNVANNNSNYTNQNQQDNANQNSNNQQATQGQQS. The 49-residue stretch at 410-458 folds into the LysM domain; that stretch reads QSHTVYGQENLYRIAIQYYGEGTQANVDKIKRANGLSSNNIHNGQTLVI.

It localises to the cell membrane. This chain is Probable elastin-binding protein EbpS (ebpS), found in Staphylococcus epidermidis (strain ATCC 35984 / DSM 28319 / BCRC 17069 / CCUG 31568 / BM 3577 / RP62A).